Here is a 366-residue protein sequence, read N- to C-terminus: Di-N-acetylchitobiase (366 aa).

The N-terminal stretch at 1-22 (MALCGLPEFTLLLLPLLARLSA) is a signal peptide. Residues 23–366 (GDCPCSEAAL…EMWGALKPRL (344 aa)) enclose the GH18 domain. The Proton donor role is filled by Glu127. N-linked (GlcNAc...) asparagine glycosylation is found at Asn131, Asn177, Asn212, Asn246, and Asn283.

This sequence belongs to the glycosyl hydrolase 18 family.

It is found in the lysosome. Its function is as follows. Involved in the degradation of asparagine-linked glycoproteins. Hydrolyze of N-acetyl-beta-D-glucosamine (1-4)N-acetylglucosamine chitobiose core from the reducing end of the bond, it requires prior cleavage by glycosylasparaginase. The sequence is that of Di-N-acetylchitobiase (Ctbs) from Mus musculus (Mouse).